A 562-amino-acid polypeptide reads, in one-letter code: NRAMP-like transporter smf-1 (562 aa).

Over M1–K55 the chain is Cytoplasmic. A helical membrane pass occupies residues L56–I76. Residues E77–G83 are Extracellular-facing. A helical membrane pass occupies residues A84–L104. Over Q105 to E140 the chain is Cytoplasmic. Residues I141–L161 traverse the membrane as a helical segment. Residues S162 to G164 lie on the Extracellular side of the membrane. The helical transmembrane segment at F165–I185 threads the bilayer. Residues D186–E194 are Cytoplasmic-facing. Residues L195–V215 traverse the membrane as a helical segment. Residues K216–Q241 are Extracellular-facing. The helical transmembrane segment at A242–V262 threads the bilayer. Topologically, residues K263–A287 are cytoplasmic. The chain crosses the membrane as a helical span at residues I288–L308. Over Y309–G347 the chain is Extracellular. N334 carries N-linked (GlcNAc...) asparagine glycosylation. Residues I348–A368 traverse the membrane as a helical segment. Topologically, residues A369–R398 are cytoplasmic. Residues V399–G419 traverse the membrane as a helical segment. The Extracellular segment spans residues V420 to D428. Residue N422 is glycosylated (N-linked (GlcNAc...) asparagine). The helical transmembrane segment at F429–T449 threads the bilayer. Residues S450–K462 are Cytoplasmic-facing. Residues V463–I483 form a helical membrane-spanning segment. The Extracellular segment spans residues S484–Y496. A helical membrane pass occupies residues I497–L517. The Cytoplasmic portion of the chain corresponds to Y518–Q562.

Belongs to the NRAMP family. Expressed in dopaminergic neurons (at protein level). Expressed predominantly in anterior and posterior intestine, rectal gland cell, H-shaped excretory cell, vulva cells, proximal uterus and spermatheca in adults. Weakly expressed in hyp7 hypodermis, pharyngeal muscles and some anterior sensory, ring and posterior head neurons in adults. Expressed in the anchor cell at the larval stage.

The protein resides in the apical cell membrane. It localises to the cytoplasmic vesicle membrane. Functionally, probable divalent metal ion transporter which regulates Mn(2+) uptake. The polypeptide is NRAMP-like transporter smf-1 (smf-1) (Caenorhabditis elegans).